Consider the following 1060-residue polypeptide: Carbamoyl phosphate synthase large chain (1060 aa).

Positions 1 to 401 are carboxyphosphate synthetic domain; that stretch reads MPKRTDIRKI…SLLKACRSLE (401 aa). 12 residues coordinate ATP: Arg-129, Arg-169, Gly-175, Gly-176, Arg-208, Ile-210, Glu-215, Gly-241, Ile-242, His-243, Gln-284, and Glu-298. The ATP-grasp 1 domain occupies 133 to 327; that stretch reads KQLMEELNQP…IAKLAAKIAV (195 aa). Residues Gln-284, Glu-298, and Asn-300 each coordinate Mg(2+). Mn(2+) is bound by residues Gln-284, Glu-298, and Asn-300. The tract at residues 402–546 is oligomerization domain; the sequence is IGVDHIKIAD…YSTYAVENES (145 aa). Residues 547 to 929 form a carbamoyl phosphate synthetic domain region; sequence LISDKASILV…ALYKAFEAAY (383 aa). Positions 671 to 861 constitute an ATP-grasp 2 domain; sequence EATLQALNIP…MAQVATKVIL (191 aa). The ATP site is built by Arg-707, Ala-746, Leu-748, Glu-752, Gly-777, Val-778, His-779, Ser-780, Gln-820, and Glu-832. Gln-820, Glu-832, and Asn-834 together coordinate Mg(2+). Mn(2+)-binding residues include Gln-820, Glu-832, and Asn-834. Residues 930–1060 form the MGS-like domain; the sequence is LHMPDYGNIV…SRAFTLKVLD (131 aa). The segment at 930 to 1060 is allosteric domain; it reads LHMPDYGNIV…SRAFTLKVLD (131 aa).

Belongs to the CarB family. Composed of two chains; the small (or glutamine) chain promotes the hydrolysis of glutamine to ammonia, which is used by the large (or ammonia) chain to synthesize carbamoyl phosphate. Tetramer of heterodimers (alpha,beta)4. Mg(2+) is required as a cofactor. Requires Mn(2+) as cofactor.

The catalysed reaction is hydrogencarbonate + L-glutamine + 2 ATP + H2O = carbamoyl phosphate + L-glutamate + 2 ADP + phosphate + 2 H(+). The enzyme catalyses hydrogencarbonate + NH4(+) + 2 ATP = carbamoyl phosphate + 2 ADP + phosphate + 2 H(+). The protein operates within amino-acid biosynthesis; L-arginine biosynthesis; carbamoyl phosphate from bicarbonate: step 1/1. It functions in the pathway pyrimidine metabolism; UMP biosynthesis via de novo pathway; (S)-dihydroorotate from bicarbonate: step 1/3. Its function is as follows. Large subunit of the glutamine-dependent carbamoyl phosphate synthetase (CPSase). CPSase catalyzes the formation of carbamoyl phosphate from the ammonia moiety of glutamine, carbonate, and phosphate donated by ATP, constituting the first step of 2 biosynthetic pathways, one leading to arginine and/or urea and the other to pyrimidine nucleotides. The large subunit (synthetase) binds the substrates ammonia (free or transferred from glutamine from the small subunit), hydrogencarbonate and ATP and carries out an ATP-coupled ligase reaction, activating hydrogencarbonate by forming carboxy phosphate which reacts with ammonia to form carbamoyl phosphate. This chain is Carbamoyl phosphate synthase large chain, found in Streptococcus agalactiae serotype V (strain ATCC BAA-611 / 2603 V/R).